We begin with the raw amino-acid sequence, 95 residues long: Aspartyl/glutamyl-tRNA(Asn/Gln) amidotransferase subunit C (95 aa).

It belongs to the GatC family. In terms of assembly, heterotrimer of A, B and C subunits.

The enzyme catalyses L-glutamyl-tRNA(Gln) + L-glutamine + ATP + H2O = L-glutaminyl-tRNA(Gln) + L-glutamate + ADP + phosphate + H(+). The catalysed reaction is L-aspartyl-tRNA(Asn) + L-glutamine + ATP + H2O = L-asparaginyl-tRNA(Asn) + L-glutamate + ADP + phosphate + 2 H(+). Functionally, allows the formation of correctly charged Asn-tRNA(Asn) or Gln-tRNA(Gln) through the transamidation of misacylated Asp-tRNA(Asn) or Glu-tRNA(Gln) in organisms which lack either or both of asparaginyl-tRNA or glutaminyl-tRNA synthetases. The reaction takes place in the presence of glutamine and ATP through an activated phospho-Asp-tRNA(Asn) or phospho-Glu-tRNA(Gln). This is Aspartyl/glutamyl-tRNA(Asn/Gln) amidotransferase subunit C from Methylorubrum extorquens (strain CM4 / NCIMB 13688) (Methylobacterium extorquens).